We begin with the raw amino-acid sequence, 525 residues long: Asparagine synthetase domain-containing protein YML096W (525 aa).

Cys2 functions as the For GATase activity in the catalytic mechanism. In terms of domain architecture, Glutamine amidotransferase type-2 spans 2-209 (CGILLHYCPN…LNSNQRSHLP (208 aa)). The Asparagine synthetase domain occupies 210–523 (YEVTSEIDLN…GTDLLKENRN (314 aa)). The segment at 503-525 (SAKMTKDGNKHGTDLLKENRNCS) is disordered. Over residues 506 to 525 (MTKDGNKHGTDLLKENRNCS) the composition is skewed to basic and acidic residues.

The protein resides in the cytoplasm. The protein is Asparagine synthetase domain-containing protein YML096W of Saccharomyces cerevisiae (strain ATCC 204508 / S288c) (Baker's yeast).